A 394-amino-acid chain; its full sequence is Acryloyl-CoA reductase (NADH) (394 aa).

FAD-binding positions include 135-144 (FALTEPNAGS) and 170-172 (FIS). Ser-144 is a binding site for substrate. 254-257 (DGAR) serves as a coordination point for substrate. FAD-binding positions include Arg-282, Gln-293, and 350 to 354 (QIHGG). Glu-377 acts as the Proton acceptor in catalysis. Residue Gly-378 participates in substrate binding. An FAD-binding site is contributed by 379–381 (TSE).

In terms of assembly, heterohexadecamer; tetramer of tetramers. Each tetramer is composed of 2 alpha (AcrC), a beta (AcrA) and a gamma (AcrB) subunit. FAD is required as a cofactor.

The protein localises to the cytoplasm. It catalyses the reaction propanoyl-CoA + NAD(+) = acryloyl-CoA + NADH + H(+). Functionally, probable catalytic subunit of the acryloyl-CoA reductase complex involved in the pathway of L-alanine fermentation. Catalyzes the irreversible NADH-dependent formation of propionyl-CoA from acryloyl-CoA. It can also use 3-buten-2-one as substrate. In Anaerotignum propionicum (Clostridium propionicum), this protein is Acryloyl-CoA reductase (NADH) (acrC).